The following is a 379-amino-acid chain: Retinoic acid receptor RXR-alpha-B (379 aa).

Polar residues predominate over residues Met1–Ser22. The disordered stretch occupies residues Met1–Asp24. The segment at Met1–Ile53 is modulating. The nuclear receptor DNA-binding region spans Lys51–Glu126. 4 residues coordinate Zn(2+): Cys54, Cys57, Cys71, and Cys74. The segment at Cys54 to Cys74 adopts an NR C4-type zinc-finger fold. The tract at residues Lys79 to Lys84 is nuclear localization signal. Zn(2+) contacts are provided by Cys90, Cys96, Cys106, and Cys109. The NR C4-type zinc finger occupies Cys90–Cys109. A hinge region spans residues Lys120–Gly141. The region spanning Asn144–Pro375 is the NR LBD domain. The 9-cis-retinoate site is built by Arg233 and Ala244. Residues Arg233 and Ala244 each contribute to the all-trans-retinoate site. Positions Arg265–Gly285 are required for nuclear export. Positions Ile364–Pro375 are AF-2.

It belongs to the nuclear hormone receptor family. NR2 subfamily. Homodimer. Heterodimer; with a rar molecule. Binds DNA preferentially as a rar/rxr heterodimer. As to expression, uniform expression from the blastula to mid-gastrula stages. At 12 hours post-fertilization (hpf), expressed strongly in the tail and weakly elsewhere. At 24 hpf, weak expression in the forebrain, eyes and pharyngeal endoderm and continued expression in the tail mesoderm. At 48 hpf, anterior expression limited to ventral cells underlying the head, medial expression in the pectoral fin bud mesoderm and continued tail expression.

The protein resides in the nucleus. Its function is as follows. Receptor for retinoic acid that acts as a transcription factor. Forms homo- or heterodimers with retinoic acid receptors (rars) and binds to target response elements in response to their ligands, all-trans or 9-cis retinoic acid, to regulate gene expression in various biological processes. The rar/rxr heterodimers bind to the retinoic acid response elements (RARE) composed of tandem 5'-AGGTCA-3' sites known as DR1-DR5 to regulate transcription. The high affinity ligand for rxrs is 9-cis retinoic acid. In the absence of ligand, the rar/rxr heterodimers associate with a multiprotein complex containing transcription corepressors that induce histone deacetylation, chromatin condensation and transcriptional suppression. On ligand binding, the corepressors dissociate from the receptors and coactivators are recruited leading to transcriptional activation. In Danio rerio (Zebrafish), this protein is Retinoic acid receptor RXR-alpha-B (rxrab).